Reading from the N-terminus, the 50-residue chain is Large ribosomal subunit protein bL33B (50 aa).

It belongs to the bacterial ribosomal protein bL33 family.

The polypeptide is Large ribosomal subunit protein bL33B (Streptococcus pyogenes serotype M1).